A 259-amino-acid chain; its full sequence is Protein odd-skipped-related 1 (259 aa).

3 consecutive C2H2-type zinc fingers follow at residues 168–190 (FVCK…ERTH), 196–218 (YTCD…RYIH), and 224–246 (FKCQ…KTLH).

This sequence belongs to the Odd C2H2-type zinc-finger protein family.

The protein localises to the nucleus. Functionally, transcriptional repressor. Required for pronephric kidney development. The protein is Protein odd-skipped-related 1 of Xenopus tropicalis (Western clawed frog).